Consider the following 330-residue polypeptide: Olfactory receptor 11H6 (330 aa).

Residues 1–43 (MFFIIHSLVTSVFLTALGPQNRTMHFVTEFVLLGFHGQREMQS) lie on the Extracellular side of the membrane. Asn21 carries N-linked (GlcNAc...) asparagine glycosylation. A helical membrane pass occupies residues 44-64 (CFFSFILVLYLLTLLGNGAIV). The Cytoplasmic segment spans residues 65 to 72 (CAVKLDRR). A helical membrane pass occupies residues 73 to 93 (LHTPMYILLGNFAFLEIWYIS). Topologically, residues 94–117 (STVPNMLVNILSEIKTISFSGCFL) are extracellular. A disulfide bridge links Cys115 with Cys207. Residues 118 to 138 (QFYFFFSLGTTECFFLSVMAY) form a helical membrane-spanning segment. Over 139–157 (DRYLAICRPLHYPSIMTGK) the chain is Cytoplasmic. A helical transmembrane segment spans residues 158 to 178 (FCIILVCVCWVGGFLCYPVPI). The Extracellular portion of the chain corresponds to 179 to 215 (VLISQLPFCGPNIIDHLVCDPGPLFALACISAPSTEL). Residues 216-235 (ICYTFNSMIIFGPFLSILGS) form a helical membrane-spanning segment. At 236-255 (YTLVIRAVLCIPSGAGRTKA) the chain is on the cytoplasmic side. A helical transmembrane segment spans residues 256–276 (FSTCGSHLMVVSLFYGTLMVM). Residues 277-289 (YVSPTSGNPAGMQ) lie on the Extracellular side of the membrane. Residues 290–310 (KIITLVYTAMTPFLNPLIYSL) traverse the membrane as a helical segment. Residues 311–330 (RNKDMKDALKRVLGLTVSQN) are Cytoplasmic-facing.

This sequence belongs to the G-protein coupled receptor 1 family.

The protein localises to the cell membrane. Functionally, odorant receptor. The polypeptide is Olfactory receptor 11H6 (OR11H6) (Homo sapiens (Human)).